Consider the following 342-residue polypeptide: Isopentenyl-diphosphate delta-isomerase (342 aa).

A substrate-binding site is contributed by 11 to 12 (RK). FMN-binding positions include Ser-68, 69–71 (SMT), Ser-99, and Asn-127. 99-101 (SMR) is a binding site for substrate. Residue Gln-162 participates in substrate binding. Residue Glu-163 coordinates Mg(2+). FMN-binding positions include Lys-194, Thr-224, 274-276 (GLK), and 295-296 (AG).

It belongs to the IPP isomerase type 2 family. As to quaternary structure, homooctamer. Dimer of tetramers. FMN is required as a cofactor. The cofactor is NADPH. It depends on Mg(2+) as a cofactor.

The protein localises to the cytoplasm. It catalyses the reaction isopentenyl diphosphate = dimethylallyl diphosphate. In terms of biological role, involved in the biosynthesis of isoprenoids. Catalyzes the 1,3-allylic rearrangement of the homoallylic substrate isopentenyl (IPP) to its allylic isomer, dimethylallyl diphosphate (DMAPP). This chain is Isopentenyl-diphosphate delta-isomerase, found in Rickettsia canadensis (strain McKiel).